Reading from the N-terminus, the 533-residue chain is Adenylate kinase 7 (533 aa).

The interval 177–426 (PVKICILGPP…EPRNYGLTDE (250 aa)) is adenylate kinase. An ATP-binding site is contributed by 187–192 (AVGKSS). Positions 207-265 (QLKDVISEAIAKLETIVAPKDIGEGKEEVEEEEEEENVEDAQELLDGIKESMEQNAGQL) are NMP. AMP contacts are provided by residues 242-265 (ENVEDAQELLDGIKESMEQNAGQL), 292-295 (GFPK), and Gln-299. Positions 347 to 357 (NLPERIVAGTH) are LID. AMP is bound at residue Arg-365. Residue Gly-397 participates in ATP binding. Residues 419 to 487 (RNYGLTDEEK…EERELLEAQS (69 aa)) adopt a coiled-coil conformation. Residues 489–533 (PLRNYLMTYVMPTLIQGLNECCNVRPEDPVDFLAEYLFKNNPEAQ) are DPY-30.

The protein in the central section; belongs to the adenylate kinase family. In the C-terminal section; belongs to the dpy-30 family.

The protein resides in the cytoplasm. The protein localises to the cytosol. It is found in the cell projection. Its subcellular location is the cilium. It localises to the flagellum. It catalyses the reaction AMP + ATP = 2 ADP. It carries out the reaction a 2'-deoxyribonucleoside 5'-diphosphate + ATP = a 2'-deoxyribonucleoside 5'-triphosphate + ADP. The catalysed reaction is a ribonucleoside 5'-diphosphate + ATP = a ribonucleoside 5'-triphosphate + ADP. Functionally, nucleoside monophosphate (NMP) kinase that catalyzes the reversible transfer of the terminal phosphate group between nucleoside triphosphates and monophosphates. Has highest activity toward AMP, and weaker activity toward dAMP, CMP and dCMP. Also displays broad nucleoside diphosphate kinase activity. Involved in maintaining ciliary structure and function. The protein is Adenylate kinase 7 (AK7) of Macaca fascicularis (Crab-eating macaque).